We begin with the raw amino-acid sequence, 141 residues long: Large ribosomal subunit protein uL11 (141 aa).

This sequence belongs to the universal ribosomal protein uL11 family. Part of the ribosomal stalk of the 50S ribosomal subunit. Interacts with L10 and the large rRNA to form the base of the stalk. L10 forms an elongated spine to which L12 dimers bind in a sequential fashion forming a multimeric L10(L12)X complex. Post-translationally, one or more lysine residues are methylated.

In terms of biological role, forms part of the ribosomal stalk which helps the ribosome interact with GTP-bound translation factors. The protein is Large ribosomal subunit protein uL11 of Tropheryma whipplei (strain TW08/27) (Whipple's bacillus).